A 2122-amino-acid polypeptide reads, in one-letter code: Unique GC organizer UGO (2122 aa).

The next 5 helical transmembrane spans lie at 19-39, 50-70, 82-102, 115-135, and 145-165; these read FAVA…TNSL, LFGM…FVIV, TYIM…MQLI, VLTF…VLIG, and VVCS…DVGL. Disordered regions lie at residues 337-403, 422-532, 565-591, 627-762, 785-815, 848-870, 903-949, 999-1046, 1068-1308, 1328-1368, 1515-1540, 1560-1608, and 1639-1727; these read AALH…HRSA, FRGL…GPFV, DLRE…SGLQ, HRRG…GRAN, HAAS…CSAS, MSRR…RAER, SKEG…ASAN, RNET…LHSR, PSDL…HEAV, AGLS…SEEE, ANSS…AASA, AAEH…TPHT, and QGLG…TFFG. Residues 363–374 are compositionally biased toward polar residues; that stretch reads RSNTLRGCSGQV. Basic and acidic residues-rich tracts occupy residues 503–525, 565–585, and 632–645; these read LRMD…DPAK, DLRE…HAAA, and GARD…RGEP. Over residues 672-687 the composition is skewed to basic residues; it reads RLSRSRRHKTRTYRRG. Residues 690 to 699 are compositionally biased toward low complexity; it reads SDGTTAGTSD. The span at 707 to 720 shows a compositional bias: acidic residues; the sequence is LEDEGSDSGQESES. The segment covering 725-735 has biased composition (basic residues); it reads RRRMRSSRNRR. The segment covering 741 to 750 has biased composition (low complexity); sequence EDSSSGTSVR. A compositionally biased stretch (basic and acidic residues) spans 751–760; sequence SEGRHCREGR. Asparagine 762 carries N-linked (GlcNAc...) asparagine glycosylation. The segment covering 848 to 860 has biased composition (basic residues); that stretch reads MSRRRRREGKSRP. Polar residues-rich tracts occupy residues 999 to 1011 and 1072 to 1097; these read RNET…SPAT and SLFT…SARI. Residue asparagine 1000 is glycosylated (N-linked (GlcNAc...) asparagine). A glycan (N-linked (GlcNAc...) asparagine) is linked at asparagine 1165. The span at 1220 to 1261 shows a compositional bias: basic and acidic residues; the sequence is SREDLVGEADSHVSPEKEVFVSSRREKREEQVPRSRREERRD. A compositionally biased stretch (basic residues) spans 1262-1276; sequence RRGRRWRRGRRRRKA. Basic and acidic residues-rich tracts occupy residues 1277 to 1289 and 1345 to 1359; these read RECS…RDSS and GDMR…HSDG. Over residues 1515 to 1527 the composition is skewed to polar residues; that stretch reads ANSSTAVSSSLPD. An N-linked (GlcNAc...) asparagine glycan is attached at asparagine 1516. Low complexity-rich tracts occupy residues 1528–1540 and 1597–1608; these read STAW…AASA and TQTPQTPQTPHT. Over residues 1684–1693 the composition is skewed to polar residues; it reads LSATPSTRLQ. Transmembrane regions (helical) follow at residues 1859–1879, 1956–1976, 1989–2009, 2017–2037, and 2040–2060; these read VAWL…LLRL, MLAL…WHLI, IIPA…ILAV, IFLL…PPGV, and VQLF…GQLF. Positions 2102–2122 are disordered; sequence DEGSEDEVSMGSGHLVGDRSA.

Interacts with guanylate cyclase GC; the interaction regulates guanylate cyclase GC trafficking and catalytic activity.

The protein localises to the cell membrane. Functionally, in tachyzoites, required for the cellular trafficking of guanylate cyclase GC to the cell membrane and for GC guanylate cyclase activity. The polypeptide is Unique GC organizer UGO (Toxoplasma gondii (strain ATCC 50853 / GT1)).